The primary structure comprises 288 residues: Light-independent protochlorophyllide reductase iron-sulfur ATP-binding protein (288 aa).

ATP contacts are provided by residues Gly-12 to Thr-17 and Lys-41. Ser-16 is a Mg(2+) binding site. [4Fe-4S] cluster is bound by residues Cys-97 and Cys-131. Residue Asn-182–Arg-183 coordinates ATP.

It belongs to the NifH/BchL/ChlL family. Homodimer. Protochlorophyllide reductase is composed of three subunits; ChlL, ChlN and ChlB. Requires [4Fe-4S] cluster as cofactor.

It catalyses the reaction chlorophyllide a + oxidized 2[4Fe-4S]-[ferredoxin] + 2 ADP + 2 phosphate = protochlorophyllide a + reduced 2[4Fe-4S]-[ferredoxin] + 2 ATP + 2 H2O. It functions in the pathway porphyrin-containing compound metabolism; chlorophyll biosynthesis (light-independent). Component of the dark-operative protochlorophyllide reductase (DPOR) that uses Mg-ATP and reduced ferredoxin to reduce ring D of protochlorophyllide (Pchlide) to form chlorophyllide a (Chlide). This reaction is light-independent. The L component serves as a unique electron donor to the NB-component of the complex, and binds Mg-ATP. The chain is Light-independent protochlorophyllide reductase iron-sulfur ATP-binding protein from Synechocystis sp. (strain ATCC 27184 / PCC 6803 / Kazusa).